A 94-amino-acid chain; its full sequence is Small ribosomal subunit protein uS19 (94 aa).

The protein belongs to the universal ribosomal protein uS19 family.

In terms of biological role, protein S19 forms a complex with S13 that binds strongly to the 16S ribosomal RNA. This is Small ribosomal subunit protein uS19 from Buchnera aphidicola subsp. Cinara cedri (strain Cc).